Reading from the N-terminus, the 427-residue chain is Glutamate-1-semialdehyde 2,1-aminomutase (427 aa).

An N6-(pyridoxal phosphate)lysine modification is found at Lys265.

The protein belongs to the class-III pyridoxal-phosphate-dependent aminotransferase family. HemL subfamily. As to quaternary structure, homodimer. Pyridoxal 5'-phosphate serves as cofactor.

It localises to the cytoplasm. The enzyme catalyses (S)-4-amino-5-oxopentanoate = 5-aminolevulinate. The protein operates within porphyrin-containing compound metabolism; protoporphyrin-IX biosynthesis; 5-aminolevulinate from L-glutamyl-tRNA(Glu): step 2/2. The protein is Glutamate-1-semialdehyde 2,1-aminomutase of Bordetella bronchiseptica (strain ATCC BAA-588 / NCTC 13252 / RB50) (Alcaligenes bronchisepticus).